The sequence spans 339 residues: Phenylalanine--tRNA ligase alpha subunit (339 aa).

Glu-254 lines the Mg(2+) pocket.

The protein belongs to the class-II aminoacyl-tRNA synthetase family. Phe-tRNA synthetase alpha subunit type 1 subfamily. As to quaternary structure, tetramer of two alpha and two beta subunits. Mg(2+) is required as a cofactor.

The protein resides in the cytoplasm. It catalyses the reaction tRNA(Phe) + L-phenylalanine + ATP = L-phenylalanyl-tRNA(Phe) + AMP + diphosphate + H(+). This chain is Phenylalanine--tRNA ligase alpha subunit, found in Lachnoclostridium phytofermentans (strain ATCC 700394 / DSM 18823 / ISDg) (Clostridium phytofermentans).